The sequence spans 458 residues: MPN domain-containing protein (458 aa).

The interval 1–37 is disordered; that stretch reads MGSEPPSSPQVVEEGADEEDEELSGAEDADLRSSSGR. Residues 14–28 are compositionally biased toward acidic residues; it reads EGADEEDEELSGAED. The 96-residue stretch at 42 to 137 folds into the RAMA domain; that stretch reads TRRGITLRVL…QYKTTWLHKY (96 aa). The DNA site is built by Ser94, Ser96, and Trp116. The tract at residues 147–175 is disordered; that stretch reads SEGEDDEMGDDDEEEGKTTIPVEDKNKKS. The span at 148–161 shows a compositional bias: acidic residues; sequence EGEDDEMGDDDEEE. Residues 229-364 enclose the MPN domain; the sequence is VAVSSNVLLL…VASTITPFWV (136 aa). Zn(2+)-binding residues include His306, His308, and Asp319. The JAMM motif motif lies at 306–319; it reads HSHPRGPALPSLQD.

The protein belongs to the peptidase M67 family. In terms of processing, degraded following binding to N(6)-methyladenosine methylated DNA (m6A).

Functionally, probable protease. Acts as a sensor of N(6)-methyladenosine methylation on DNA (m6A): recognizes and binds m6A DNA, leading to its degradation. Binds only double strand DNA (dsDNA) in a sequence-independent manner. The protein is MPN domain-containing protein of Danio rerio (Zebrafish).